Consider the following 303-residue polypeptide: 4-diphosphocytidyl-2-C-methyl-D-erythritol kinase (303 aa).

Lys-24 is a catalytic residue. Residue 111-121 coordinates ATP; that stretch reads PIASGIGGGSA. The active site involves Asp-153.

This sequence belongs to the GHMP kinase family. IspE subfamily.

The enzyme catalyses 4-CDP-2-C-methyl-D-erythritol + ATP = 4-CDP-2-C-methyl-D-erythritol 2-phosphate + ADP + H(+). Its pathway is isoprenoid biosynthesis; isopentenyl diphosphate biosynthesis via DXP pathway; isopentenyl diphosphate from 1-deoxy-D-xylulose 5-phosphate: step 3/6. Catalyzes the phosphorylation of the position 2 hydroxy group of 4-diphosphocytidyl-2C-methyl-D-erythritol. This is 4-diphosphocytidyl-2-C-methyl-D-erythritol kinase from Rhizobium johnstonii (strain DSM 114642 / LMG 32736 / 3841) (Rhizobium leguminosarum bv. viciae).